The following is a 301-amino-acid chain: Cytidine deaminase 1 (301 aa).

CMP/dCMP-type deaminase domains follow at residues 23–156 (SVIQ…FGPD) and 188–301 (DSSA…CYEA). 64–66 (NVE) is a substrate binding site. H77 contributes to the Zn(2+) binding site. E79 functions as the Proton donor in the catalytic mechanism. The Zn(2+) site is built by C104 and C107.

The protein belongs to the cytidine and deoxycytidylate deaminase family. In terms of assembly, homodimer. It depends on Zn(2+) as a cofactor. In terms of tissue distribution, expressed in roots, rosette leaves, stems and flowers.

It carries out the reaction cytidine + H2O + H(+) = uridine + NH4(+). The enzyme catalyses 2'-deoxycytidine + H2O + H(+) = 2'-deoxyuridine + NH4(+). Its activity is regulated as follows. Inhibited by uridine, CMP and dCMP. This enzyme scavenges exogenous and endogenous cytidine and 2'-deoxycytidine for UMP synthesis. Functions as a conventional cytidine deaminase. Has no affinity for RNA and is not involved in RNA-editing by C-to-U deamination. In Arabidopsis thaliana (Mouse-ear cress), this protein is Cytidine deaminase 1 (CDA1).